A 498-amino-acid chain; its full sequence is MAKKNYIIGIDAGTTGIRTFCFNDKGKVISSAYQEFKQYYPKPGWVEHDPEEIWVKTQKLITLAIKNGKLNPKDAVAIGITNQRETSVVWDKKTGKPVYNAIVWQCRRTSDICKDLKKQSLDSNFRNKTGLVLDAYFSGTKIQWILDNVKGARDRAERGDLLFGTIDTWLLYKLTGHKEHKTDHTNASRTLLFNIQTKEWDEELCKILRVPMSMLPKAFNSKNLFGFTSNVKSIPDGIPISSLVGDQQGALFGQLCTEPGEAKNTYGTGCFLLFNVGDEFRISNQGLITTLALGPEGKTVYCLEGSVFIGGAVVQFLRDNLEFFKYSKDSEKLVKSIKTKDDIVFVPAFAGLGAPHWDQEARGAIFGLSRDTTPAQITRAALKAIALQSYELANAMEKETGKPLKFLRVDGGATSNAWLMQFQADILGTKVIRPQNVDTTVLGAAYLAGLERGFFKSVAHLRKEETKTTQFTPKMKESERKEEIDKWNLAISRVKTET.

Thr-14 provides a ligand contact to ADP. 2 residues coordinate ATP: Thr-14 and Thr-15. Residue Thr-14 coordinates sn-glycerol 3-phosphate. Residue Arg-18 participates in ADP binding. Sn-glycerol 3-phosphate-binding residues include Arg-84, Glu-85, Tyr-136, and Asp-246. Glycerol-binding residues include Arg-84, Glu-85, Tyr-136, Asp-246, and Gln-247. The ADP site is built by Thr-268 and Gly-311. Residues Thr-268, Gly-311, Gln-315, and Gly-412 each contribute to the ATP site. ADP contacts are provided by Gly-412 and Asn-416.

This sequence belongs to the FGGY kinase family.

The enzyme catalyses glycerol + ATP = sn-glycerol 3-phosphate + ADP + H(+). The protein operates within polyol metabolism; glycerol degradation via glycerol kinase pathway; sn-glycerol 3-phosphate from glycerol: step 1/1. Inhibited by fructose 1,6-bisphosphate (FBP). Key enzyme in the regulation of glycerol uptake and metabolism. Catalyzes the phosphorylation of glycerol to yield sn-glycerol 3-phosphate. This Leptospira biflexa serovar Patoc (strain Patoc 1 / Ames) protein is Glycerol kinase.